A 142-amino-acid chain; its full sequence is Large-conductance mechanosensitive channel (142 aa).

3 consecutive transmembrane segments (helical) span residues 14-34, 38-58, and 82-102; these read VVDL…VNSL, VIMP…YYIP, and GQFL…FMVI.

The protein belongs to the MscL family. In terms of assembly, homopentamer.

The protein localises to the cell inner membrane. In terms of biological role, channel that opens in response to stretch forces in the membrane lipid bilayer. May participate in the regulation of osmotic pressure changes within the cell. This chain is Large-conductance mechanosensitive channel, found in Methylorubrum populi (strain ATCC BAA-705 / NCIMB 13946 / BJ001) (Methylobacterium populi).